We begin with the raw amino-acid sequence, 316 residues long: Short-chain dehydrogenase/reductase family 16C member 6 (316 aa).

40-64 is a binding site for NAD(+); that stretch reads LITGAASGLGRLLAIKFASLGAILV. S173 serves as a coordination point for substrate. Residue Y186 is the Proton acceptor of the active site.

It belongs to the short-chain dehydrogenases/reductases (SDR) family.

In Bos taurus (Bovine), this protein is Short-chain dehydrogenase/reductase family 16C member 6 (SDR16C6).